The following is a 252-amino-acid chain: Pyrroloquinoline-quinone synthase (252 aa).

This sequence belongs to the PqqC family.

The enzyme catalyses 6-(2-amino-2-carboxyethyl)-7,8-dioxo-1,2,3,4,7,8-hexahydroquinoline-2,4-dicarboxylate + 3 O2 = pyrroloquinoline quinone + 2 H2O2 + 2 H2O + H(+). It participates in cofactor biosynthesis; pyrroloquinoline quinone biosynthesis. In terms of biological role, ring cyclization and eight-electron oxidation of 3a-(2-amino-2-carboxyethyl)-4,5-dioxo-4,5,6,7,8,9-hexahydroquinoline-7,9-dicarboxylic-acid to PQQ. The sequence is that of Pyrroloquinoline-quinone synthase from Acinetobacter baumannii (strain AB307-0294).